The following is a 259-amino-acid chain: Dolichol-phosphate mannosyltransferase subunit 1 (259 aa).

A2 carries the N-acetylalanine modification. S3 is subject to Phosphoserine. GDP-alpha-D-mannose-binding residues include P31, Y33, E35, I62, D64, D117, A118, D119, R146, R233, and K239. Residue D119 participates in Mg(2+) binding. Mn(2+) is bound at residue D119.

It belongs to the glycosyltransferase 2 family. As to quaternary structure, component of the dolichol-phosphate mannose (DPM) synthase complex composed of DPM1, DPM2 and DPM3; within the complex, directly interacts with DPM3. This interaction may stabilize DPM1. Requires Mg(2+) as cofactor. The cofactor is Mn(2+). It depends on Ca(2+) as a cofactor.

The protein localises to the endoplasmic reticulum. The catalysed reaction is a di-trans,poly-cis-dolichyl phosphate + GDP-alpha-D-mannose = a di-trans,poly-cis-dolichyl beta-D-mannosyl phosphate + GDP. Its pathway is protein modification; protein glycosylation. Its function is as follows. Transfers mannose from GDP-mannose to dolichol monophosphate to form dolichol phosphate mannose (Dol-P-Man) which is the mannosyl donor in pathways leading to N-glycosylation, glycosyl phosphatidylinositol membrane anchoring, and O-mannosylation of proteins; catalytic subunit of the dolichol-phosphate mannose (DPM) synthase complex. The polypeptide is Dolichol-phosphate mannosyltransferase subunit 1 (DPM1) (Sus scrofa (Pig)).